The following is a 455-amino-acid chain: Ribulose bisphosphate carboxylase large chain (455 aa).

Residue K5 is modified to N6,N6,N6-trimethyllysine. 2 residues coordinate substrate: N114 and T164. Catalysis depends on K166, which acts as the Proton acceptor. Position 168 (K168) interacts with substrate. Mg(2+) is bound by residues K192, D194, and E195. N6-carboxylysine is present on K192. Catalysis depends on H285, which acts as the Proton acceptor. Residues R286, H318, and S370 each coordinate substrate.

It belongs to the RuBisCO large chain family. Type I subfamily. Heterohexadecamer of 8 large chains and 8 small chains; disulfide-linked. The disulfide link is formed within the large subunit homodimers. The cofactor is Mg(2+). Post-translationally, the disulfide bond which can form in the large chain dimeric partners within the hexadecamer appears to be associated with oxidative stress and protein turnover.

The protein localises to the plastid. It is found in the chloroplast. It catalyses the reaction 2 (2R)-3-phosphoglycerate + 2 H(+) = D-ribulose 1,5-bisphosphate + CO2 + H2O. The catalysed reaction is D-ribulose 1,5-bisphosphate + O2 = 2-phosphoglycolate + (2R)-3-phosphoglycerate + 2 H(+). RuBisCO catalyzes two reactions: the carboxylation of D-ribulose 1,5-bisphosphate, the primary event in carbon dioxide fixation, as well as the oxidative fragmentation of the pentose substrate in the photorespiration process. Both reactions occur simultaneously and in competition at the same active site. The chain is Ribulose bisphosphate carboxylase large chain from Erythrina crista-galli (Cockspur coral tree).